A 367-amino-acid polypeptide reads, in one-letter code: UDP-N-acetylglucosamine--N-acetylmuramyl-(pentapeptide) pyrophosphoryl-undecaprenol N-acetylglucosamine transferase (367 aa).

UDP-N-acetyl-alpha-D-glucosamine is bound by residues 15 to 17 (TGG), asparagine 127, arginine 163, serine 191, isoleucine 249, and glutamine 294.

Belongs to the glycosyltransferase 28 family. MurG subfamily.

Its subcellular location is the cell inner membrane. The catalysed reaction is di-trans,octa-cis-undecaprenyl diphospho-N-acetyl-alpha-D-muramoyl-L-alanyl-D-glutamyl-meso-2,6-diaminopimeloyl-D-alanyl-D-alanine + UDP-N-acetyl-alpha-D-glucosamine = di-trans,octa-cis-undecaprenyl diphospho-[N-acetyl-alpha-D-glucosaminyl-(1-&gt;4)]-N-acetyl-alpha-D-muramoyl-L-alanyl-D-glutamyl-meso-2,6-diaminopimeloyl-D-alanyl-D-alanine + UDP + H(+). The protein operates within cell wall biogenesis; peptidoglycan biosynthesis. In terms of biological role, cell wall formation. Catalyzes the transfer of a GlcNAc subunit on undecaprenyl-pyrophosphoryl-MurNAc-pentapeptide (lipid intermediate I) to form undecaprenyl-pyrophosphoryl-MurNAc-(pentapeptide)GlcNAc (lipid intermediate II). The polypeptide is UDP-N-acetylglucosamine--N-acetylmuramyl-(pentapeptide) pyrophosphoryl-undecaprenol N-acetylglucosamine transferase (Burkholderia thailandensis (strain ATCC 700388 / DSM 13276 / CCUG 48851 / CIP 106301 / E264)).